Consider the following 119-residue polypeptide: Methylglyoxal synthase (119 aa).

The MGS-like domain occupies Met-1–Ile-119. Substrate contacts are provided by residues His-8, Lys-12, Thr-34–Thr-37, and Ser-54–Gly-55. Asp-60 functions as the Proton donor/acceptor in the catalytic mechanism. His-87 contacts substrate.

The protein belongs to the methylglyoxal synthase family.

The catalysed reaction is dihydroxyacetone phosphate = methylglyoxal + phosphate. Catalyzes the formation of methylglyoxal from dihydroxyacetone phosphate. The protein is Methylglyoxal synthase of Clostridium perfringens (strain 13 / Type A).